Here is a 1141-residue protein sequence, read N- to C-terminus: Translocase of chloroplast 125, chloroplastic (1141 aa).

Disordered regions lie at residues 1-177 (MDAL…ISGY) and 325-431 (GFVE…EANE). Basic and acidic residues-rich tracts occupy residues 57 to 72 (RVPE…KRDG) and 107 to 121 (IDGR…REDL). A compositionally biased stretch (acidic residues) spans 132 to 150 (YDDDDDDEEEEEDGSEEGE). A compositionally biased stretch (low complexity) spans 151-167 (STSSSIINSEYSSSASN). The segment covering 328–353 (EAEEAESDVFTEGEDGYDDEDEDGDI) has biased composition (acidic residues). 2 stretches are compositionally biased toward low complexity: residues 389–401 (RSSA…TTAT) and 408–429 (TASS…SSEA). Residues 505–734 (DFACTILVLG…KLQEASTPGK (230 aa)) enclose the AIG1-type G domain. Residues 514–521 (GKTGVGKS) are G1. Position 517–522 (517–522 (GVGKSA)) interacts with GTP. S521 lines the Mg(2+) pocket. The G2 stretch occupies residues 541-545 (STTKV). Residues 561 to 564 (DTPG) form a G3 region. Residues 633 to 636 (THAS) form a G4 region. Residues H634 and 682–683 (EN) each bind GTP. The interval 682–684 (ENH) is G5. Disordered regions lie at residues 758–795 (QLKM…PFRP) and 832–871 (IRRR…AVPM). A compositionally biased stretch (acidic residues) spans 770 to 789 (EDSDDDSDEEDEEEGDEYDD). Basic residues predominate over residues 832 to 841 (IRRRRERKKQ). A helical transmembrane segment spans residues 1116–1136 (MVLIGIVPILRSLINCRFGFG).

It belongs to the TRAFAC class TrmE-Era-EngA-EngB-Septin-like GTPase superfamily. AIG1/Toc34/Toc159-like paraseptin GTPase family. TOC159 subfamily. As to quaternary structure, part of the TOC core complex. Requires Mg(2+) as cofactor.

Its subcellular location is the plastid. The protein localises to the chloroplast outer membrane. Its function is as follows. GTPase involved in protein precursor import into chloroplasts. Seems to recognize chloroplast-destined precursor proteins and regulate their presentation to the translocation channel through GTP hydrolysis. Probably specialized in the import of nuclear encoded non-photosynthetic preproteins from the cytoplasm to the chloroplast. This chain is Translocase of chloroplast 125, chloroplastic, found in Physcomitrium patens (Spreading-leaved earth moss).